We begin with the raw amino-acid sequence, 639 residues long: Muscarinic acetylcholine receptor M3 (639 aa).

Residues 1–115 are Extracellular-facing; it reads MLTHYQLCFQ…DPLGGHAVWQ (115 aa). 6 N-linked (GlcNAc...) asparagine glycosylation sites follow: N16, N44, N45, N54, N97, and N101. A helical transmembrane segment spans residues 116-139; that stretch reads VVLIAFLTGIIALVTIIGNILVIV. Over 140-152 the chain is Cytoplasmic; that stretch reads SFKVNKQLKTVNN. A helical transmembrane segment spans residues 153-173; the sequence is YFLLSLACADLIIGVISMNLF. Over 174–190 the chain is Extracellular; the sequence is TTYIIMGHWALGNLACD. C189 and C269 are oxidised to a cystine. A helical membrane pass occupies residues 191–212; the sequence is LWLSIDYVASNASVMNLLVISF. Over 213-232 the chain is Cytoplasmic; it reads DRYFSITRPLTYRAKRTTKR. Residues 233–255 traverse the membrane as a helical segment; that stretch reads AGVMIGLAWIISFVLWAPAILFW. Residues 256–277 are Extracellular-facing; sequence QYFVGKRTVPLDECFIQFLSEP. A helical membrane pass occupies residues 278-300; it reads IITFGTAIAAFYLPVTIMSILYW. The Cytoplasmic segment spans residues 301–542; the sequence is RIYKETEKRT…LIKEKKAAQT (242 aa). Disordered stretches follow at residues 370–404 and 431–471; these read PNTDQGDQEHSSSDSWNNNDAAASLENSASSDEED and LPSS…GGSF. The span at 382–393 shows a compositional bias: low complexity; sequence SDSWNNNDAAAS. A compositionally biased stretch (basic and acidic residues) spans 443–454; the sequence is ELQKSDTDSQEK. The helical transmembrane segment at 543–563 threads the bilayer; sequence LSAILFAFIITWTPYNIMVLV. Residues 564 to 576 lie on the Extracellular side of the membrane; it reads NTFCDCVPKTVWN. Residues 577–596 traverse the membrane as a helical segment; that stretch reads LGYWLCYINSTVNPVCYALC. Topologically, residues 597–639 are cytoplasmic; sequence NKMFRNTFKMLLLCQCDKRKRRKQQYQQRQSVIFHKRIPREAS.

This sequence belongs to the G-protein coupled receptor 1 family. Muscarinic acetylcholine receptor subfamily. CHRM3 sub-subfamily. In terms of tissue distribution, brain, heart atria, and ventricle.

The protein resides in the cell membrane. It is found in the postsynaptic cell membrane. In terms of biological role, the muscarinic acetylcholine receptor mediates various cellular responses, including inhibition of adenylate cyclase, breakdown of phosphoinositides and modulation of potassium channels through the action of G proteins. Primary transducing effect is Pi turnover. In Gallus gallus (Chicken), this protein is Muscarinic acetylcholine receptor M3 (CHRM3).